Consider the following 307-residue polypeptide: Protein FAM76A (307 aa).

Disordered regions lie at residues 161–181 (SRLS…SSIQ) and 287–307 (KQAA…ITSP). Residues 217-297 (IIAQLKEEVA…QAAALSKGKK (81 aa)) adopt a coiled-coil conformation.

This sequence belongs to the FAM76 family.

This is Protein FAM76A (FAM76A) from Gallus gallus (Chicken).